The primary structure comprises 72 residues: Penaeidin-2d (72 aa).

The first 21 residues, 1–21 (MRLVVCLVFLASFALVCQGGA), serve as a signal peptide directing secretion. Q22 is subject to Pyrrolidone carboxylic acid. 3 disulfides stabilise this stretch: C45-C59, C48-C66, and C60-C67. Residue K71 is modified to Lysine amide.

This sequence belongs to the penaeidin family.

Its subcellular location is the cytoplasmic granule. Its function is as follows. Antibacterial and antifungal activity. Presents chitin-binding activity. The sequence is that of Penaeidin-2d from Penaeus setiferus (Atlantic white shrimp).